Consider the following 897-residue polypeptide: Protein SAP1 (897 aa).

Disordered regions lie at residues 112 to 144, 195 to 219, 302 to 398, 413 to 438, and 456 to 561; these read EEPAPRNDMPSSKTYTNHSSSFTRSTEPPPVFQ, PSKPLSNNASRQHKNPIEHNDPPLK, QMSD…TKST, SKSNTKPIIKSNASSPTSSLTVPNSV, and KKVA…REEP. Polar residues predominate over residues 120–137; the sequence is MPSSKTYTNHSSSFTRST. Over residues 209 to 219 the composition is skewed to basic and acidic residues; sequence NPIEHNDPPLK. Over residues 307–321 the composition is skewed to low complexity; sequence SVTSSTSSNKSVSSS. Positions 364–380 are enriched in polar residues; that stretch reads LETSTTMDSSKIRNPQI. The span at 468-478 shows a compositional bias: basic residues; that stretch reads KKSHPILKSKT. A compositionally biased stretch (low complexity) spans 480–496; it reads KVPNSSSKKTSSHPSRP. The span at 497–523 shows a compositional bias: polar residues; it reads VSNSKPYSHGASQNKKPSKNQTTSMSK. Phosphoserine is present on S536. An ATP-binding site is contributed by 645-652; that stretch reads GPPGTGKT.

It belongs to the AAA ATPase family. Interacts with SPT2/SIN1.

This chain is Protein SAP1 (SAP1), found in Saccharomyces cerevisiae (strain ATCC 204508 / S288c) (Baker's yeast).